We begin with the raw amino-acid sequence, 789 residues long: GDH/6PGL endoplasmic bifunctional protein (789 aa).

Positions 1–16 (MLLAAMCLALLGCLQA) are cleaved as a signal peptide. Q17 carries the post-translational modification Pyrrolidone carboxylic acid. Positions 17–524 (QELKGHVSII…GGQLTFSQQQ (508 aa)) are hexose-6-phosphate dehydrogenase. NADP(+) contacts are provided by residues 29–36 (GATGDLAK) and Y146. Residue N154 is glycosylated (N-linked (GlcNAc...) asparagine). An NADP(+)-binding site is contributed by K171. Residues K171, 201 to 205 (HYLGK), E240, and D259 each bind D-glucose 6-phosphate. The residue at position 205 (K205) is an N6-succinyllysine. The active-site Proton acceptor is the H264. The N-linked (GlcNAc...) asparagine glycan is linked to N279. The D-glucose 6-phosphate site is built by K357 and R362. R367 is a binding site for NADP(+). The residue at position 424 (K424) is an N6-succinyllysine. A linker region spans residues 525–538 (LEVLIPDLGSVPKP). Residues 539-789 (SDFQVLGARY…WYMDYEAFLG (251 aa)) form a 6-phosphogluconolactonase region. W615 serves as a coordination point for NADP(+). A glycan (N-linked (GlcNAc...) asparagine) is linked at N681.

In the N-terminal section; belongs to the glucose-6-phosphate dehydrogenase family. It in the C-terminal section; belongs to the glucosamine/galactosamine-6-phosphate isomerase family. 6-phosphogluconolactonase subfamily. As to quaternary structure, homodimer. As to expression, expressed in liver (at protein level). Expressed in muscles. Expressed in adipose tissues.

Its subcellular location is the endoplasmic reticulum lumen. It carries out the reaction D-glucose 6-phosphate + NAD(+) = 6-phospho-D-glucono-1,5-lactone + NADH + H(+). The catalysed reaction is D-glucose 6-phosphate + NADP(+) = 6-phospho-D-glucono-1,5-lactone + NADPH + H(+). The enzyme catalyses 6-phospho-D-glucono-1,5-lactone + H2O = 6-phospho-D-gluconate + H(+). It catalyses the reaction 2-deoxy-D-glucose 6-phosphate + NAD(+) = 2-deoxy-6-phospho-D-glucono-1,5-lactone + NADH + H(+). It carries out the reaction 2-deoxy-D-glucose 6-phosphate + NADP(+) = 2-deoxy-6-phospho-D-glucono-1,5-lactone + NADPH + H(+). The catalysed reaction is D-galactose 6-phosphate + NADP(+) = 6-phospho-D-galactono-1,5-lactone + NADPH + H(+). The enzyme catalyses D-galactose 6-phosphate + NAD(+) = 6-phospho-D-galactono-1,5-lactone + NADH + H(+). It catalyses the reaction D-glucosamine 6-phosphate + NADP(+) = 2-amino-2-deoxy-6-phospho-D-glucono-1,5-lactone + NADPH + 2 H(+). It carries out the reaction D-glucose + NAD(+) = D-glucono-1,5-lactone + NADH + H(+). The catalysed reaction is D-glucose + NADP(+) = D-glucono-1,5-lactone + NADPH + H(+). The enzyme catalyses D-glucose 6-sulfate + NADP(+) = 6-sulfo-D-glucono-1,5-lactone + NADPH + H(+). It functions in the pathway carbohydrate degradation; pentose phosphate pathway; D-ribulose 5-phosphate from D-glucose 6-phosphate (oxidative stage). The protein operates within carbohydrate degradation; pentose phosphate pathway; D-ribulose 5-phosphate from D-glucose 6-phosphate (oxidative stage): step 2/3. In terms of biological role, bifunctional enzyme localized in the lumen of the endoplasmic reticulum that catalyzes the first two steps of the oxidative branch of the pentose phosphate pathway/shunt, an alternative to glycolysis and a major source of reducing power and metabolic intermediates for biosynthetic processes. Has a hexose-6-phosphate dehydrogenase activity, with broad substrate specificity compared to glucose-6-phosphate 1-dehydrogenase/G6PD, and catalyzes the first step of the pentose phosphate pathway. In addition, acts as a 6-phosphogluconolactonase and catalyzes the second step of the pentose phosphate pathway. May have a dehydrogenase activity for alternative substrates including glucosamine 6-phosphate and glucose 6-sulfate. The main function of this enzyme is to provide reducing equivalents such as NADPH to maintain the adequate levels of reductive cofactors in the oxidizing environment of the endoplasmic reticulum. By producing NADPH that is needed by reductases of the lumen of the endoplasmic reticulum like corticosteroid 11-beta-dehydrogenase isozyme 1/HSD11B1, indirectly regulates their activity. This Mus musculus (Mouse) protein is GDH/6PGL endoplasmic bifunctional protein.